The primary structure comprises 341 residues: NADH-quinone oxidoreductase subunit H (341 aa).

A run of 8 helical transmembrane segments spans residues 16 to 36 (LLIIVLQIVAIVLPLLIAVAY), 86 to 106 (VVFVGAPMLTFFLALVAWAVI), 119 to 139 (VGVLYLFAISSLGVYGIIMAG), 165 to 185 (IGFILISVLLTVGSLNLSDVV), 191 to 211 (MWFIVPHFPLFILFIISGLAE), 254 to 274 (GAMTSILFLGGWMAPFGLGWL), 276 to 296 (IPGLIWFVLKICLVMFVFLWV), and 315 to 335 (VFLPFSLFWLVLTASVLTAFG).

Belongs to the complex I subunit 1 family. As to quaternary structure, NDH-1 is composed of 14 different subunits. Subunits NuoA, H, J, K, L, M, N constitute the membrane sector of the complex.

The protein localises to the cell inner membrane. The enzyme catalyses a quinone + NADH + 5 H(+)(in) = a quinol + NAD(+) + 4 H(+)(out). Functionally, NDH-1 shuttles electrons from NADH, via FMN and iron-sulfur (Fe-S) centers, to quinones in the respiratory chain. The immediate electron acceptor for the enzyme in this species is believed to be ubiquinone. Couples the redox reaction to proton translocation (for every two electrons transferred, four hydrogen ions are translocated across the cytoplasmic membrane), and thus conserves the redox energy in a proton gradient. This subunit may bind ubiquinone. The protein is NADH-quinone oxidoreductase subunit H of Paramagnetospirillum magneticum (strain ATCC 700264 / AMB-1) (Magnetospirillum magneticum).